We begin with the raw amino-acid sequence, 515 residues long: Maturase K (515 aa).

This sequence belongs to the intron maturase 2 family. MatK subfamily.

It is found in the plastid. The protein resides in the chloroplast. Its function is as follows. Usually encoded in the trnK tRNA gene intron. Probably assists in splicing its own and other chloroplast group II introns. This is Maturase K from Ceratophyllum demersum (Rigid hornwort).